The following is a 360-amino-acid chain: G-protein coupled receptor 183 (360 aa).

The Extracellular portion of the chain corresponds to 1–30 (MDIKMDNFTTPSAASLESDCDLYAHHHTAR). An N-linked (GlcNAc...) asparagine glycan is attached at Asn7. Residues 31 to 56 (ILMPLHYSIVFIIGLVGNLLALIVII) form a helical membrane-spanning segment. Residues 57–76 (QNRKKINSTTLYSTNLVISD) lie on the Cytoplasmic side of the membrane. A helical transmembrane segment spans residues 77–94 (ILFTTALPTRIAYYALGF). Residue Arg86 participates in 7alpha,25-dihydroxycholesterol binding. The Extracellular segment spans residues 95-104 (DWRIGDALCR). Cys103 and Cys180 form a disulfide bridge. The chain crosses the membrane as a helical span at residues 105–126 (ITALVFYINTYAGVNFMTCLSI). Residues Tyr111 and Tyr115 each coordinate 7alpha,25-dihydroxycholesterol. Residues 125 to 133 (SIDRFFAVV) are interaction with G proteins. At 127 to 148 (DRFFAVVHPLRYNKIKRIEHAK) the chain is on the cytoplasmic side. Residues 149–167 (CICIFVWILVFGQTLPLLI) form a helical membrane-spanning segment. Residues 168–191 (NPMSKQEAERTTCMEYPNFEETKS) lie on the Extracellular side of the membrane. A helical membrane pass occupies residues 192–214 (LPWILLGACFIGYVLPLVIILIC). At 215-240 (YSQICCKLFKTAKQNPLTEKSGVNKK) the chain is on the cytoplasmic side. Residues 241 to 264 (ALNTIIFIIVVFVVCFTPYHVAII) form a helical membrane-spanning segment. 7alpha,25-dihydroxycholesterol is bound at residue Tyr259. Residues 265–286 (QHMIKKLRLPGLLECSQRHSFQ) are Extracellular-facing. The helical transmembrane segment at 287–311 (ISLHFTVCLMNFNCCMDPFIYFFAC) threads the bilayer. Topologically, residues 312-360 (KGYKRKVMKMLKRQVSVSISSAVRSAPEENSREMTETQMMIHSKSLNGK) are cytoplasmic. Ser327 is modified (phosphoserine). Residues 339–360 (EENSREMTETQMMIHSKSLNGK) are disordered. The span at 347–360 (ETQMMIHSKSLNGK) shows a compositional bias: polar residues.

The protein belongs to the G-protein coupled receptor 1 family. In terms of assembly, homodimer and heterodimer. Heterodimerizes with CXCR5; leading to modulate the interaction between of CXCL13 and CXCR5.

The protein localises to the cell membrane. Functionally, G-protein coupled receptor expressed in lymphocytes that acts as a chemotactic receptor for B-cells, T-cells, splenic dendritic cells, monocytes/macrophages and astrocytes. Receptor for oxysterol 7-alpha,25-dihydroxycholesterol (7-alpha,25-OHC) and other related oxysterols. Mediates cell positioning and movement of a number of cells by binding the 7-alpha,25-OHC ligand that forms a chemotactic gradient. Binding of 7-alpha,25-OHC mediates the correct localization of B-cells during humoral immune responses. Guides B-cell movement along the B-cell zone-T-cell zone boundary and later to interfollicular and outer follicular regions. Its specific expression during B-cell maturation helps position B-cells appropriately for mounting T-dependent antibody responses. Collaborates with CXCR5 to mediate B-cell migration; probably by forming a heterodimer with CXCR5 that affects the interaction between of CXCL13 and CXCR5. Also acts as a chemotactic receptor for some T-cells upon binding to 7-alpha,25-OHC ligand. Promotes follicular helper T (Tfh) cells differentiation by positioning activated T-cells at the follicle-T-zone interface, promoting contact of newly activated CD4 T-cells with activated dendritic cells and exposing them to Tfh-cell-promoting inducible costimulator (ICOS) ligand. Expression in splenic dendritic cells is required for their homeostasis, localization and ability to induce B- and T-cell responses: GPR183 acts as a chemotactic receptor in dendritic cells that mediates the accumulation of CD4(+) dendritic cells in bridging channels. Regulates migration of astrocytes and is involved in communication between astrocytes and macrophages. Promotes osteoclast precursor migration to bone surfaces. Signals constitutively through G(i)-alpha, but not G(s)-alpha or G(q)-alpha. Signals constitutively also via MAPK1/3 (ERK1/2). The chain is G-protein coupled receptor 183 (GPR183) from Bos taurus (Bovine).